The sequence spans 401 residues: Inactive leucine-rich repeat receptor-like protein kinase CORYNE (401 aa).

Residues Met-1–Ser-33 form the signal peptide. At Thr-34 to Val-62 the chain is on the extracellular side. Residues Ile-63–Phe-83 form a helical membrane-spanning segment. The Cytoplasmic portion of the chain corresponds to Leu-84–Phe-401. The Protein kinase domain maps to Ser-118–Phe-401. Residues Leu-124 to Tyr-132 and Lys-146 contribute to the ATP site.

It belongs to the protein kinase superfamily. Ser/Thr protein kinase family. In terms of assembly, self-interacts. Parts of a tetrameric complex made of two CLV2/CRN heterodimers that can interact with CLV3 and CLE peptides. CLV2/CRN heterodimer interacts with CLV1 homodimers. Interacts with CLV1 and CLV2. CLV2/CRN heterodimer can interact with BAM3. Present in roots, stems, leaves, inflorescence, flowers and siliques. Mostly expressed in shoot tips and, to a lesser extent, in young organs and roots. Also expressed in the inner tissues of the proximal root meristem. Expressed in the vascular cylinder of root tips, mostly in phloem poles.

The protein localises to the cell membrane. Its subcellular location is the endoplasmic reticulum membrane. Functionally, involved in the perception of CLV3 and CLV3-like (CLE) peptides, that act as extracellular signals regulating meristem maintenance. Modulates root, shoot and flower apical meristem maintenance and floral organ development regulation, probably via CLAVATA (CLV)-like pathways involving at least CLV3 and CLE19. In complex with CLV2, perceives secreted CLV3-like effector proteins from plant-parasitic cyst nematodes as ligand mimics of the plant CLE signaling pathway. This recognition is required for proper feeding structure (syncytium) development and ultimately successful nematode infection. CLE14 perception by CLV2/CRN complex triggers root meristem differentiation. Required for the sensing of the root CLE peptides (e.g. CLE8, CLE9/CLE10, CLE11, CLE13, CLE14, CLE16, CLE17, CLE18, CLE20, CLE21, CLE25, CLE26, CLE40, CLE41/CLE44 and CLE45), which also involves CLV2 and leads to root growth regulation, mostly in the phloem and protophloem. Promotes the accumulation of BAM3, especially at later stages of protophloem development. This Arabidopsis thaliana (Mouse-ear cress) protein is Inactive leucine-rich repeat receptor-like protein kinase CORYNE.